Reading from the N-terminus, the 251-residue chain is Small ribosomal subunit protein uS3 (251 aa).

Positions 22-93 (LNEFFTRELA…GIAIYAERVE (72 aa)) constitute a KH type-2 domain. Positions 223-251 (TVKSYKQTAEDETETDAPVEAEAEVEATA) are disordered. Positions 232–251 (EDETETDAPVEAEAEVEATA) are enriched in acidic residues.

This sequence belongs to the universal ribosomal protein uS3 family. As to quaternary structure, component of the small ribosomal subunit. Mature ribosomes consist of a small (40S) and a large (60S) subunit. The 40S subunit contains about 32 different proteins and 1 molecule of RNA (18S). The 60S subunit contains 45 different proteins and 3 molecules of RNA (25S, 5.8S and 5S).

The protein localises to the cytoplasm. Functionally, component of the ribosome, a large ribonucleoprotein complex responsible for the synthesis of proteins in the cell. The small ribosomal subunit (SSU) binds messenger RNAs (mRNAs) and translates the encoded message by selecting cognate aminoacyl-transfer RNA (tRNA) molecules. The large subunit (LSU) contains the ribosomal catalytic site termed the peptidyl transferase center (PTC), which catalyzes the formation of peptide bonds, thereby polymerizing the amino acids delivered by tRNAs into a polypeptide chain. The nascent polypeptides leave the ribosome through a tunnel in the LSU and interact with protein factors that function in enzymatic processing, targeting, and the membrane insertion of nascent chains at the exit of the ribosomal tunnel. The polypeptide is Small ribosomal subunit protein uS3 (RPS3) (Candida albicans (strain SC5314 / ATCC MYA-2876) (Yeast)).